Reading from the N-terminus, the 208-residue chain is Thymidylate kinase (208 aa).

10–17 (GIDGSGKS) is a binding site for ATP.

This sequence belongs to the thymidylate kinase family.

The catalysed reaction is dTMP + ATP = dTDP + ADP. Its function is as follows. Phosphorylation of dTMP to form dTDP in both de novo and salvage pathways of dTTP synthesis. The polypeptide is Thymidylate kinase (Jannaschia sp. (strain CCS1)).